Reading from the N-terminus, the 178-residue chain is Major urinary protein 4 (178 aa).

The N-terminal stretch at 1 to 16 (MKLLLCLGLTLVCIHA) is a signal peptide. Cys-80 and Cys-173 form a disulfide bridge.

Belongs to the calycin superfamily. Lipocalin family. In terms of tissue distribution, expressed in lacrimal gland, parotid gland, sublingual gland, nasal mucus, and vomeronasal organ.

The protein localises to the secreted. Its function is as follows. Binds pheromones, likely to displace pheromones complexed to urinary MUPs and transport them to the vomeronasal organ (VNO) where they associate with their neuronal receptor(s). MUP4 is highly specific for the male mouse pheromone 2-sec-butyl-4,5-dihydrothiazole (SBT). This chain is Major urinary protein 4 (Mup4), found in Mus musculus (Mouse).